The primary structure comprises 356 residues: Protein RecA (356 aa).

G79–T86 provides a ligand contact to ATP.

Belongs to the RecA family.

The protein localises to the cytoplasm. Can catalyze the hydrolysis of ATP in the presence of single-stranded DNA, the ATP-dependent uptake of single-stranded DNA by duplex DNA, and the ATP-dependent hybridization of homologous single-stranded DNAs. It interacts with LexA causing its activation and leading to its autocatalytic cleavage. This is Protein RecA from Borrelia hermsii (strain HS1 / DAH).